A 463-amino-acid polypeptide reads, in one-letter code: L-seryl-tRNA(Sec) selenium transferase (463 aa).

K295 bears the N6-(pyridoxal phosphate)lysine mark.

This sequence belongs to the SelA family. In terms of assembly, homodecamer; pentamer of dimers. Binds only one seryl-tRNA(Sec) per dimer. Requires pyridoxal 5'-phosphate as cofactor.

It localises to the cytoplasm. It carries out the reaction L-seryl-tRNA(Sec) + selenophosphate + H(+) = L-selenocysteinyl-tRNA(Sec) + phosphate. It functions in the pathway aminoacyl-tRNA biosynthesis; selenocysteinyl-tRNA(Sec) biosynthesis; selenocysteinyl-tRNA(Sec) from L-seryl-tRNA(Sec) (bacterial route): step 1/1. Its function is as follows. Converts seryl-tRNA(Sec) to selenocysteinyl-tRNA(Sec) required for selenoprotein biosynthesis. This chain is L-seryl-tRNA(Sec) selenium transferase, found in Shigella boydii serotype 18 (strain CDC 3083-94 / BS512).